The primary structure comprises 459 residues: Glutamate--tRNA ligase 1 (459 aa).

The 'HIGH' region signature appears at 8-18; it reads PSPTGYIHIGN. A 'KMSKS' region motif is present at residues 249-253; it reads GLSKR. Residue K252 coordinates ATP.

Belongs to the class-I aminoacyl-tRNA synthetase family. Glutamate--tRNA ligase type 1 subfamily. Monomer.

The protein localises to the cytoplasm. It catalyses the reaction tRNA(Glu) + L-glutamate + ATP = L-glutamyl-tRNA(Glu) + AMP + diphosphate. In terms of biological role, catalyzes the attachment of glutamate to tRNA(Glu) in a two-step reaction: glutamate is first activated by ATP to form Glu-AMP and then transferred to the acceptor end of tRNA(Glu). The polypeptide is Glutamate--tRNA ligase 1 (Bartonella quintana (strain Toulouse) (Rochalimaea quintana)).